The chain runs to 58 residues: Large ribosomal subunit protein uL30 (58 aa).

The protein belongs to the universal ribosomal protein uL30 family. In terms of assembly, part of the 50S ribosomal subunit.

The sequence is that of Large ribosomal subunit protein uL30 from Novosphingobium aromaticivorans (strain ATCC 700278 / DSM 12444 / CCUG 56034 / CIP 105152 / NBRC 16084 / F199).